We begin with the raw amino-acid sequence, 559 residues long: Intestinal-type alkaline phosphatase (559 aa).

The signal sequence occupies residues 1 to 19; sequence MQGPWVLLLLGLRLQLSLS. Residue Asp61 coordinates Mg(2+). Residues Asp61 and Ser111 each contribute to the Zn(2+) site. The active-site Phosphoserine intermediate is Ser111. The cysteines at positions 140 and 202 are disulfide-linked. N-linked (GlcNAc...) asparagine glycosylation is present at Asn141. Ser174 contributes to the Mg(2+) binding site. Residue Glu235 coordinates Ca(2+). N-linked (GlcNAc...) asparagine glycosylation occurs at Asn241. Phe288, Glu289, and Asp304 together coordinate Ca(2+). Glu330 is a Mg(2+) binding site. Residues Asp335, His339, Asp376, and His377 each contribute to the Zn(2+) site. Asn426 is a glycosylation site (N-linked (GlcNAc...) asparagine). His450 provides a ligand contact to Zn(2+). Cys485 and Cys492 form a disulfide bridge. Residues 496–531 form a disordered region; that stretch reads PPADESQTTTTTRQTTITTTTTTTTTTTTPVHNSAR. The segment covering 503–524 has biased composition (low complexity); it reads TTTTTRQTTITTTTTTTTTTTT. Residue Asn528 is the site of GPI-anchor amidated asparagine attachment. The propeptide at 529–559 is removed in mature form; the sequence is SARSLGPATAPLALALLAGMLMLLLGAPAES.

Belongs to the alkaline phosphatase family. In terms of assembly, homodimer. It depends on Mg(2+) as a cofactor. Zn(2+) serves as cofactor. Ca(2+) is required as a cofactor. Intestine and thymus.

The protein localises to the cell membrane. The catalysed reaction is a phosphate monoester + H2O = an alcohol + phosphate. Functionally, alkaline phosphatase that can hydrolyze various phosphate compounds. The protein is Intestinal-type alkaline phosphatase (Iap) of Mus musculus (Mouse).